The primary structure comprises 460 residues: Serine incorporator 5 (460 aa).

The Extracellular portion of the chain corresponds to 1–36 (MSARCCAGQLACCCGSAGCALCCGCCPKFRQSRSTR). A helical membrane pass occupies residues 37–57 (FMYLFYFTLVIIPCCVMMSPS). Topologically, residues 58-89 (VMKQMTEHIPFFEDFCKGIKAGDTCENLVGYS) are cytoplasmic. A helical membrane pass occupies residues 90 to 110 (AVYRVCFGMACFFFVFCVLTF). The Extracellular segment spans residues 111 to 124 (KVNNSKSCRASIHN). Residue asparagine 113 is glycosylated (N-linked (GlcNAc...) asparagine). A helical membrane pass occupies residues 125 to 145 (GFWFFKLLLLGAMCSGAFFIP). Over 146-156 (DQETFLNVWRY) the chain is Cytoplasmic. Residues 157 to 177 (VGAVGSFFFICIQLLLIVEFA) traverse the membrane as a helical segment. At 178-197 (HKWNKNWTAGTVRNKLWYAS) the chain is on the extracellular side. Asparagine 183 carries an N-linked (GlcNAc...) asparagine glycan. Residues 198-218 (LSLALIMYSIAVGGLALMAVF) traverse the membrane as a helical segment. Residues 219 to 229 (YTQWDDCMDNK) are Cytoplasmic-facing. Residues 230–250 (ILLGVHGGLCVLISLAAISPC) traverse the membrane as a helical segment. Residues 251–258 (VQNRQPHS) lie on the Extracellular side of the membrane. A helical membrane pass occupies residues 259-279 (GLLQPGLISCYVTYLTFSALT). The Cytoplasmic segment spans residues 280–309 (SKPEKVVKDEHGKNVTICVPDFGQDFRRDE). Residues 310-330 (SMVTWLGTLLLVVCISYSCLT) form a helical membrane-spanning segment. At 331–390 (STTRSSSDALQRRYGAPELEVARCCFCFGPDGEDTEEQQNVKEGPRVIYDEKKGTVYSYS) the chain is on the extracellular side. Residues 391-411 (YFHFVLLLASLYVMMTLTSWF) form a helical membrane-spanning segment. Residues 412–427 (HYENATIETFFVGSWS) are Cytoplasmic-facing. The helical transmembrane segment at 428 to 448 (IFWVKMASCWMCVLLYLWTLV) threads the bilayer. Residues 449-460 (APLCCPSRQFSV) are Extracellular-facing.

It belongs to the TDE1 family. In terms of tissue distribution, brain. Expressed at high levels in the white matter and the oligodendroglial cells of the brain. Expressed at low levels in the liver.

The protein localises to the cell membrane. It catalyses the reaction a 1,2-diacyl-sn-glycero-3-phospho-L-serine(in) = a 1,2-diacyl-sn-glycero-3-phospho-L-serine(out). The enzyme catalyses a 1,2-diacyl-sn-glycero-3-phosphocholine(in) = a 1,2-diacyl-sn-glycero-3-phosphocholine(out). It carries out the reaction a 1,2-diacyl-sn-glycero-3-phosphoethanolamine(in) = a 1,2-diacyl-sn-glycero-3-phosphoethanolamine(out). Its function is as follows. Restriction factor required to restrict infectivity of gammaretroviruses: acts by inhibiting an early step of viral infection. Impairs the penetration of the viral particle into the cytoplasm. Non-ATP-dependent, non-specific lipid transporter for phosphatidylserine, phosphatidylcholine, and phosphatidylethanolamine. Functions as a scramblase that flips lipids in both directions across the membrane. Phospholipid scrambling results in gammaretroviral surface exposure of phosphatidylserine and loss of membrane asymmetry, which leads to loss of infectivity. Enhances the incorporation of serine into phosphatidylserine and sphingolipids. May play a role in providing serine molecules for the formation of myelin glycosphingolipids in oligodendrocytes. The chain is Serine incorporator 5 (Serinc5) from Rattus norvegicus (Rat).